Here is a 410-residue protein sequence, read N- to C-terminus: Class E basic helix-loop-helix protein 41 (410 aa).

A Glycyl lysine isopeptide (Lys-Gly) (interchain with G-Cter in SUMO2) cross-link involves residue K31. Residues 44-99 (TYKLPHRLIEKKRRDRINECIAQLKDLLPEHLKLTTLGHLEKAVVLELTLKHLKAL) form the bHLH domain. Residue K121 forms a Glycyl lysine isopeptide (Lys-Gly) (interchain with G-Cter in SUMO2) linkage. The Orange domain maps to 131–166 (FHSGFQTCAKEVLQYLARFESWTPREPRCAQLVSHL). 2 disordered regions span residues 209–251 (IQRT…SAAP) and 371–410 (EVAPPGSLRPQHAHSRTHLPHAVNPESSQEDATQPAKDAP). K240 participates in a covalent cross-link: Glycyl lysine isopeptide (Lys-Gly) (interchain with G-Cter in SUMO2).

Homodimer. Heterodimer with BHLHE40/DEC1. Interacts with CIART. Interacts with BMAL1 and RXRA. Interacts with NR0B2 and HNF1A. In terms of tissue distribution, highly expressed in the caudate putamen, pineal gland, granular cell layer of the cerebellum, olfactory bulb, piriform cortex, hippocampus and hypothalamic nuclei. Moderately expressed in skeletal muscle, heart. Weakly expressed in lung.

The protein localises to the nucleus. Functionally, transcriptional repressor involved in the regulation of the circadian rhythm by negatively regulating the activity of the clock genes and clock-controlled genes. Acts as the negative limb of a novel autoregulatory feedback loop (DEC loop) which differs from the one formed by the PER and CRY transcriptional repressors (PER/CRY loop). Both these loops are interlocked as it represses the expression of PER1 and in turn is repressed by PER1/2 and CRY1/2. Represses the activity of the circadian transcriptional activator: CLOCK-BMAL1 heterodimer by competing for the binding to E-box elements (5'-CACGTG-3') found within the promoters of its target genes. Negatively regulates its own expression and the expression of DBP and BHLHE41/DEC2. Acts as a corepressor of RXR and the RXR-LXR heterodimers and represses the ligand-induced RXRA/B/G, NR1H3/LXRA, NR1H4 and VDR transactivation activity. Inhibits HNF1A-mediated transactivation of CYP1A2, CYP2E1 and CYP3A11. This Rattus norvegicus (Rat) protein is Class E basic helix-loop-helix protein 41 (Bhlhb3).